Consider the following 527-residue polypeptide: Outer capsid protein VP5 (527 aa).

The tract at residues 1–42 is involved in membrane permeabilization; the sequence is MGKFIKQLSKFGKKVGGALTSNTAKKIYKTIGDTAVRFAESD.

It belongs to the orbivirus VP5 family.

The protein localises to the virion. Functionally, VP5 protein is one of the two proteins (with VP2) which constitute the virus particle outer capsid. Acts as a membrane permeabilization protein that mediates release of viral particles from endosomal compartments into the cytoplasm. Permeabilization activity is probably negatively regulated by VP2 and is triggered by endosomal degradation of VP2 and exposure to low pH. The polypeptide is Outer capsid protein VP5 (Segment-6) (Antilocapra americana (Pronghorn)).